The chain runs to 324 residues: NADH-ubiquinone oxidoreductase chain 1 (324 aa).

The next 9 helical transmembrane spans lie at 9–29, 43–63, 75–95, 106–126, 146–166, 177–197, 237–257, 259–279, and 299–319; these read IINP…LTLL, PNIV…KLFI, FLFL…WAPM, LGVL…LGSG, ISYE…TGGF, SIWL…STLA, ILLM…IPAF, ELTA…FLWV, and FLPL…AMAG.

Belongs to the complex I subunit 1 family.

It localises to the mitochondrion inner membrane. The enzyme catalyses a ubiquinone + NADH + 5 H(+)(in) = a ubiquinol + NAD(+) + 4 H(+)(out). Core subunit of the mitochondrial membrane respiratory chain NADH dehydrogenase (Complex I) that is believed to belong to the minimal assembly required for catalysis. Complex I functions in the transfer of electrons from NADH to the respiratory chain. The immediate electron acceptor for the enzyme is believed to be ubiquinone. The chain is NADH-ubiquinone oxidoreductase chain 1 (MT-ND1) from Salmo salar (Atlantic salmon).